The chain runs to 439 residues: Ribosomal protein uS12 methylthiotransferase RimO (439 aa).

One can recognise an MTTase N-terminal domain in the interval 5 to 115 (PRISFTSLGC…VLDAVHRALP (111 aa)). [4Fe-4S] cluster-binding residues include C14, C50, C79, C146, C150, and C153. One can recognise a Radical SAM core domain in the interval 132–369 (LTPRHYAYLK…MARQQKISAR (238 aa)). Positions 372-438 (KRKVGTRQQI…QYDLHGSVAG (67 aa)) constitute a TRAM domain.

The protein belongs to the methylthiotransferase family. RimO subfamily. [4Fe-4S] cluster is required as a cofactor.

It is found in the cytoplasm. It catalyses the reaction L-aspartate(89)-[ribosomal protein uS12]-hydrogen + (sulfur carrier)-SH + AH2 + 2 S-adenosyl-L-methionine = 3-methylsulfanyl-L-aspartate(89)-[ribosomal protein uS12]-hydrogen + (sulfur carrier)-H + 5'-deoxyadenosine + L-methionine + A + S-adenosyl-L-homocysteine + 2 H(+). In terms of biological role, catalyzes the methylthiolation of an aspartic acid residue of ribosomal protein uS12. The polypeptide is Ribosomal protein uS12 methylthiotransferase RimO (Bradyrhizobium diazoefficiens (strain JCM 10833 / BCRC 13528 / IAM 13628 / NBRC 14792 / USDA 110)).